Here is a 307-residue protein sequence, read N- to C-terminus: MKGIIYKSTGSWYLVKAEDGTYYNARLRGKFKHLDLKVTNPLSVGDFVDMNIDPLTPTEAMIFNIEPRTNYIIRRSSHKTAFGHLIACNIDQSILLVTLKQPKTSIGFIDRFLISCEAFRIPAVIVFNKSDLYNEALMEEYLYLKDVYEPLGYRCILTSMEKENGLDELMPLLQNKISVVSGHSGVGKSTLINKIFPQLDIKTDIISDHSQKGKHTTTFAEMYDLNETSKVIDTPGIKELGLFEIENDVLSHYFPEMRSLMGQCRFHNCKHTNEPGCRVKEYVEAFKIAPTRYESYCSIIFEKDTHR.

Positions 78–240 (HKTAFGHLIA…VIDTPGIKEL (163 aa)) constitute a CP-type G domain. GTP is bound by residues 128 to 131 (NKSD) and 182 to 190 (GHSGVGKST). Residues Cys-264, Cys-269, His-271, and Cys-277 each coordinate Zn(2+).

It belongs to the TRAFAC class YlqF/YawG GTPase family. RsgA subfamily. Monomer. Associates with 30S ribosomal subunit, binds 16S rRNA. The cofactor is Zn(2+).

It is found in the cytoplasm. In terms of biological role, one of several proteins that assist in the late maturation steps of the functional core of the 30S ribosomal subunit. Helps release RbfA from mature subunits. May play a role in the assembly of ribosomal proteins into the subunit. Circularly permuted GTPase that catalyzes slow GTP hydrolysis, GTPase activity is stimulated by the 30S ribosomal subunit. The protein is Small ribosomal subunit biogenesis GTPase RsgA of Cytophaga hutchinsonii (strain ATCC 33406 / DSM 1761 / CIP 103989 / NBRC 15051 / NCIMB 9469 / D465).